The sequence spans 492 residues: Asparagine--tRNA ligase, mitochondrial (492 aa).

Belongs to the class-II aminoacyl-tRNA synthetase family.

It localises to the mitochondrion matrix. The catalysed reaction is tRNA(Asn) + L-asparagine + ATP = L-asparaginyl-tRNA(Asn) + AMP + diphosphate + H(+). Functionally, catalyzes the attachment of asparagine to tRNA(Asn) in the mitochondrion. This is Asparagine--tRNA ligase, mitochondrial (SLM5) from Saccharomyces cerevisiae (strain ATCC 204508 / S288c) (Baker's yeast).